We begin with the raw amino-acid sequence, 212 residues long: NAD(P)H-quinone oxidoreductase subunit K, chloroplastic (212 aa).

Cys-43, Cys-44, Cys-108, and Cys-139 together coordinate [4Fe-4S] cluster.

Belongs to the complex I 20 kDa subunit family. As to quaternary structure, NDH is composed of at least 16 different subunits, 5 of which are encoded in the nucleus. [4Fe-4S] cluster serves as cofactor.

It localises to the plastid. The protein resides in the chloroplast thylakoid membrane. The enzyme catalyses a plastoquinone + NADH + (n+1) H(+)(in) = a plastoquinol + NAD(+) + n H(+)(out). The catalysed reaction is a plastoquinone + NADPH + (n+1) H(+)(in) = a plastoquinol + NADP(+) + n H(+)(out). Its function is as follows. NDH shuttles electrons from NAD(P)H:plastoquinone, via FMN and iron-sulfur (Fe-S) centers, to quinones in the photosynthetic chain and possibly in a chloroplast respiratory chain. The immediate electron acceptor for the enzyme in this species is believed to be plastoquinone. Couples the redox reaction to proton translocation, and thus conserves the redox energy in a proton gradient. The sequence is that of NAD(P)H-quinone oxidoreductase subunit K, chloroplastic from Phaseolus vulgaris (Kidney bean).